We begin with the raw amino-acid sequence, 586 residues long: Tetratricopeptide repeat protein 39B (586 aa).

3 TPR repeats span residues 292-325 (SIIL…QQEW), 483-516 (CLVQ…EKRV), and 524-557 (PFTF…YKDY).

The protein belongs to the TTC39 family.

May be involved in lipid metabolism. The sequence is that of Tetratricopeptide repeat protein 39B (ttc39b) from Xenopus laevis (African clawed frog).